The chain runs to 430 residues: Enolase (430 aa).

Q165 is a (2R)-2-phosphoglycerate binding site. Residue E207 is the Proton donor of the active site. Mg(2+)-binding residues include D244, E287, and D314. The (2R)-2-phosphoglycerate site is built by K339, R368, S369, and K390. The Proton acceptor role is filled by K339.

It belongs to the enolase family. Component of the RNA degradosome, a multiprotein complex involved in RNA processing and mRNA degradation. Mg(2+) is required as a cofactor.

Its subcellular location is the cytoplasm. It localises to the secreted. The protein localises to the cell surface. The catalysed reaction is (2R)-2-phosphoglycerate = phosphoenolpyruvate + H2O. The protein operates within carbohydrate degradation; glycolysis; pyruvate from D-glyceraldehyde 3-phosphate: step 4/5. In terms of biological role, catalyzes the reversible conversion of 2-phosphoglycerate (2-PG) into phosphoenolpyruvate (PEP). It is essential for the degradation of carbohydrates via glycolysis. This is Enolase from Stenotrophomonas maltophilia (strain K279a).